Here is a 119-residue protein sequence, read N- to C-terminus: Large ribosomal subunit protein bL20 (119 aa).

This sequence belongs to the bacterial ribosomal protein bL20 family.

Functionally, binds directly to 23S ribosomal RNA and is necessary for the in vitro assembly process of the 50S ribosomal subunit. It is not involved in the protein synthesizing functions of that subunit. The sequence is that of Large ribosomal subunit protein bL20 from Streptococcus uberis (strain ATCC BAA-854 / 0140J).